The following is a 446-amino-acid chain: Anthranilate N-benzoyltransferase protein 2 (446 aa).

Active-site proton acceptor residues include His164 and Asp393.

Belongs to the plant acyltransferase family. Post-translationally, N-terminus is blocked.

The enzyme catalyses anthranilate + benzoyl-CoA = N-benzoylanthranilate + CoA. The protein operates within phytoalexin biosynthesis; methoxydianthramide B biosynthesis. Catalyzes the formation of N-benzoylanthranilate, in the course of methoxydianthramide B, a phytoalexin. Phytoalexins are produced in response to infection by parasites, and are essential for the expression of disease resistance. The protein is Anthranilate N-benzoyltransferase protein 2 (HCBT2) of Dianthus caryophyllus (Carnation).